Here is a 259-residue protein sequence, read N- to C-terminus: Small ribosomal subunit protein uS2 (259 aa).

It belongs to the universal ribosomal protein uS2 family.

This chain is Small ribosomal subunit protein uS2, found in Streptococcus pneumoniae (strain 70585).